Consider the following 325-residue polypeptide: GMP reductase (325 aa).

Cysteine 174 acts as the Thioimidate intermediate in catalysis. 203–226 (MIADGGIRTHGDIAKSIRFGASMV) is an NADP(+) binding site.

This sequence belongs to the IMPDH/GMPR family. GuaC type 2 subfamily.

The enzyme catalyses IMP + NH4(+) + NADP(+) = GMP + NADPH + 2 H(+). In terms of biological role, catalyzes the irreversible NADPH-dependent deamination of GMP to IMP. It functions in the conversion of nucleobase, nucleoside and nucleotide derivatives of G to A nucleotides, and in maintaining the intracellular balance of A and G nucleotides. The sequence is that of GMP reductase from Staphylococcus carnosus (strain TM300).